The sequence spans 433 residues: Monodehydroascorbate reductase (433 aa).

FAD contacts are provided by residues 12–15 (GGVS), glutamate 39, arginine 46, lysine 51, isoleucine 94, and 145–146 (RE). Residues 170-176 (GGYIGLE), glutamate 194, arginine 200, and glycine 259 contribute to the NAD(+) site. 172-176 (YIGLE) contributes to the NADP(+) binding site. NADP(+) is bound by residues arginine 200 and glycine 259. Residue aspartate 296 coordinates FAD. 312–313 (EH) provides a ligand contact to NAD(+). 312–313 (EH) contacts NADP(+). Residue valine 314 participates in FAD binding. An L-ascorbate-binding site is contributed by arginine 318. Tyrosine 347 provides a ligand contact to FAD. Residue tyrosine 347 coordinates NAD(+). Tyrosine 347 contributes to the NADP(+) binding site. Arginine 349 serves as a coordination point for L-ascorbate.

The protein belongs to the FAD-dependent oxidoreductase family. It depends on FAD as a cofactor. As to expression, expressed at relatively low levels in all tissues examined.

The protein localises to the cytoplasm. The enzyme catalyses 2 monodehydro-L-ascorbate radical + NADH + H(+) = 2 L-ascorbate + NAD(+). In terms of biological role, catalyzes the conversion of monodehydroascorbate to ascorbate, oxidizing NADH in the process. The sequence is that of Monodehydroascorbate reductase from Pisum sativum (Garden pea).